A 127-amino-acid chain; its full sequence is Small ribosomal subunit protein eS8 (127 aa).

It belongs to the eukaryotic ribosomal protein eS8 family. As to quaternary structure, part of the 30S ribosomal subunit.

The sequence is that of Small ribosomal subunit protein eS8 from Nanoarchaeum equitans (strain Kin4-M).